The chain runs to 109 residues: SRA stem-loop-interacting RNA-binding protein, mitochondrial (109 aa).

A Phosphoserine modification is found at S15. Positions 19–103 (PVAFVRRIPW…RRPKLPQTSD (85 aa)) constitute an RRM domain. T101 is subject to Phosphothreonine. A Phosphoserine modification is found at S102.

In terms of tissue distribution, ubiquitously expressed, with highest level in heart, liver, skeletal muscle and testis.

It is found in the mitochondrion. Its subcellular location is the nucleus. Functionally, RNA-binding protein that acts as a nuclear receptor corepressor. Probably acts by binding the SRA RNA, and repressing the SRA-mediated nuclear receptor coactivation. Binds the STR7 loop of SRA RNA. Also able to repress glucocorticoid (GR), androgen (AR), thyroid (TR) and VDR-mediated transactivation. The sequence is that of SRA stem-loop-interacting RNA-binding protein, mitochondrial (SLIRP) from Homo sapiens (Human).